The primary structure comprises 270 residues: Formamidopyrimidine-DNA glycosylase (270 aa).

Pro-2 functions as the Schiff-base intermediate with DNA in the catalytic mechanism. Glu-3 functions as the Proton donor in the catalytic mechanism. Lys-58 (proton donor; for beta-elimination activity) is an active-site residue. Positions 91, 109, and 151 each coordinate DNA. The FPG-type zinc-finger motif lies at 236–270 (MVYNRQEEPCRLCGTPIRQIRQGQRSTYYCPLCQP). Catalysis depends on Arg-260, which acts as the Proton donor; for delta-elimination activity.

This sequence belongs to the FPG family. Monomer. Requires Zn(2+) as cofactor.

It carries out the reaction Hydrolysis of DNA containing ring-opened 7-methylguanine residues, releasing 2,6-diamino-4-hydroxy-5-(N-methyl)formamidopyrimidine.. The enzyme catalyses 2'-deoxyribonucleotide-(2'-deoxyribose 5'-phosphate)-2'-deoxyribonucleotide-DNA = a 3'-end 2'-deoxyribonucleotide-(2,3-dehydro-2,3-deoxyribose 5'-phosphate)-DNA + a 5'-end 5'-phospho-2'-deoxyribonucleoside-DNA + H(+). Functionally, involved in base excision repair of DNA damaged by oxidation or by mutagenic agents. Acts as a DNA glycosylase that recognizes and removes damaged bases. Has a preference for oxidized purines, such as 7,8-dihydro-8-oxoguanine (8-oxoG). Has AP (apurinic/apyrimidinic) lyase activity and introduces nicks in the DNA strand. Cleaves the DNA backbone by beta-delta elimination to generate a single-strand break at the site of the removed base with both 3'- and 5'-phosphates. The sequence is that of Formamidopyrimidine-DNA glycosylase from Chromobacterium violaceum (strain ATCC 12472 / DSM 30191 / JCM 1249 / CCUG 213 / NBRC 12614 / NCIMB 9131 / NCTC 9757 / MK).